The chain runs to 131 residues: MSVTDPIADMLTRIRNAQQVNKAKVRMPASKLKRAIARVLVEEGYIQEVKEDVANGHPVLDLTLKYYAGAGVIAEIRRVSRPGVRVYRGAEDLPRVRDGFGIAIISTSQGIMTDRAARSAGIGGEVLCVVS.

The protein belongs to the universal ribosomal protein uS8 family. In terms of assembly, part of the 30S ribosomal subunit. Contacts proteins S5 and S12.

One of the primary rRNA binding proteins, it binds directly to 16S rRNA central domain where it helps coordinate assembly of the platform of the 30S subunit. The sequence is that of Small ribosomal subunit protein uS8 from Acidithiobacillus ferrooxidans (strain ATCC 23270 / DSM 14882 / CIP 104768 / NCIMB 8455) (Ferrobacillus ferrooxidans (strain ATCC 23270)).